Consider the following 231-residue polypeptide: Sugar fermentation stimulation protein homolog (231 aa).

This sequence belongs to the SfsA family.

In Citrifermentans bemidjiense (strain ATCC BAA-1014 / DSM 16622 / JCM 12645 / Bem) (Geobacter bemidjiensis), this protein is Sugar fermentation stimulation protein homolog.